Here is a 358-residue protein sequence, read N- to C-terminus: MQKNDDLLRERRKDEHVALGVKQNEQLAPSSLEDIQLIGTSIPRYNVKDIDLTTTIVGTNVPFPLYINAMTGGSRHTKKINAELAEIAREVAIPMAVGSQSAALKNSSLIDTYKIVREINPNGMILANISPEVALQEGLRAIEMLEANALQIHINPAQELVMQEGDRSFSHWLTRIEEYVKLSPVPVVVKEVGFGMTRETVKTLADIGVQTVDLAGKGGTNFAQIENDRRRDQAYDFLLDWGISTGQALIDMQHQDAPKIAYLASGGIRNPLDIVKALALGADSVGMAGQIIYSLKKEGVTKTIEKLELWKEQLRGLFVLANAKNISELKTTPLIISGELAKWGALREIDLVKLANRK.

Substrate is bound at residue 12 to 13 (RK). FMN-binding positions include 69 to 71 (AMT), S99, and N128. Q158 is a binding site for substrate. E159 serves as a coordination point for Mg(2+). Residues K190, T220, 267 to 269 (GIR), and 288 to 289 (AG) contribute to the FMN site.

This sequence belongs to the IPP isomerase type 2 family. In terms of assembly, homooctamer. Dimer of tetramers. FMN is required as a cofactor. The cofactor is NADPH. Requires Mg(2+) as cofactor.

Its subcellular location is the cytoplasm. It carries out the reaction isopentenyl diphosphate = dimethylallyl diphosphate. In terms of biological role, involved in the biosynthesis of isoprenoids. Catalyzes the 1,3-allylic rearrangement of the homoallylic substrate isopentenyl (IPP) to its allylic isomer, dimethylallyl diphosphate (DMAPP). This chain is Isopentenyl-diphosphate delta-isomerase, found in Listeria monocytogenes serotype 4b (strain F2365).